The following is a 549-amino-acid chain: Solute carrier family 22 member 6 (549 aa).

The Cytoplasmic portion of the chain corresponds to 1–23 (MAFNDLLLQLGGVGRFQKIQVTL). A helical membrane pass occupies residues 24-44 (VILPLILLASHNTLQNFTAAI). Residues 45-135 (PTHHCRPPAD…LVCSHRALRQ (91 aa)) lie on the Extracellular side of the membrane. Residues asparagine 56, asparagine 92, and asparagine 113 are each glycosylated (N-linked (GlcNAc...) asparagine). Residues 136 to 156 (LAQSLYMMGVLLGAMTFGCLA) traverse the membrane as a helical segment. The Cytoplasmic portion of the chain corresponds to 157–164 (DRLGRRKV). The helical transmembrane segment at 165 to 185 (LIFNYLQTAVSGTCAAFAPNF) threads the bilayer. Topologically, residues 186–195 (PAYCAFRFLS) are extracellular. A helical transmembrane segment spans residues 196-216 (GMSTAGVVLNCMTLNVEWMPI). At 217–224 (HTRAYVGT) the chain is on the cytoplasmic side. Residues 225–245 (LTGYVYSLGQFLLAGMAYAVP) form a helical membrane-spanning segment. Residues 246-248 (HWR) are Extracellular-facing. Residues 249 to 269 (YLQLLVSAPFFAFFIYSWFFI) form a helical membrane-spanning segment. Residues 270-337 (ESARWYASSG…ELIRCPALRR (68 aa)) lie on the Cytoplasmic side of the membrane. A helical transmembrane segment spans residues 338-358 (LFLCLSMLWFATSFAYYGLVM). The Extracellular segment spans residues 359–368 (DLQGFGVSIY). A helical membrane pass occupies residues 369 to 389 (LIQVIFGAVDLPAKLVSFLVI). The Cytoplasmic segment spans residues 390-395 (NNVGRR). A helical transmembrane segment spans residues 396–416 (PAQMASLLLAGICILINGVVP). At 417 to 425 (KDKSIVRTS) the chain is on the extracellular side. The helical transmembrane segment at 426-446 (LAVLGKGCLASSFNCIFLYTG) threads the bilayer. At 447 to 456 (EVYPTMIRQT) the chain is on the cytoplasmic side. Residues 457-477 (GLGMGSTLARVGSIVSPLVSM) traverse the membrane as a helical segment. The Extracellular segment spans residues 478-484 (TAELYPS). The chain crosses the membrane as a helical span at residues 485 to 505 (VPLFIYGAVPVAASAAIALLP). The Cytoplasmic segment spans residues 506-549 (ETLGQPLPDTVQDVENRRRGKTRKQQEELQKQMVPLQASAQVKN). Residues 521–549 (NRRRGKTRKQQEELQKQMVPLQASAQVKN) are disordered.

This sequence belongs to the major facilitator (TC 2.A.1) superfamily. Organic cation transporter (TC 2.A.1.19) family. In terms of processing, glycosylated. Glycosylation is necessary for proper targeting of the transporter to the plasma membrane.

It is found in the basolateral cell membrane. Its subcellular location is the basal cell membrane. The enzyme catalyses (6R)-L-erythro-5,6,7,8-tetrahydrobiopterin(out) + a dicarboxylate(in) = (6R)-L-erythro-5,6,7,8-tetrahydrobiopterin(in) + a dicarboxylate(out). The catalysed reaction is L-erythro-7,8-dihydrobiopterin(out) + a dicarboxylate(in) = L-erythro-7,8-dihydrobiopterin(in) + a dicarboxylate(out). It catalyses the reaction L-sepiapterin(out) + a dicarboxylate(in) = L-sepiapterin(in) + a dicarboxylate(out). It carries out the reaction prostaglandin F2alpha(out) + a dicarboxylate(in) = prostaglandin F2alpha(in) + a dicarboxylate(out). The enzyme catalyses prostaglandin E2(out) + a dicarboxylate(in) = prostaglandin E2(in) + a dicarboxylate(out). The catalysed reaction is 3',5'-cyclic AMP(out) + a dicarboxylate(in) = 3',5'-cyclic AMP(in) + a dicarboxylate(out). It catalyses the reaction 3',5'-cyclic GMP(out) + a dicarboxylate(in) = 3',5'-cyclic GMP(in) + a dicarboxylate(out). It carries out the reaction urate(out) + a dicarboxylate(in) = urate(in) + a dicarboxylate(out). The enzyme catalyses kynurenate(out) + glutarate(in) = kynurenate(in) + glutarate(out). The catalysed reaction is (indol-3-yl)acetate(out) + a dicarboxylate(in) = (indol-3-yl)acetate(in) + a dicarboxylate(out). It catalyses the reaction indoxyl sulfate(out) + a dicarboxylate(in) = indoxyl sulfate(in) + a dicarboxylate(out). It carries out the reaction N-benzoylglycine(out) + a dicarboxylate(in) = N-benzoylglycine(in) + a dicarboxylate(out). The enzyme catalyses 3-carboxy-4-methyl-5-propyl-2-furanpropanoate(out) + a dicarboxylate(in) = 3-carboxy-4-methyl-5-propyl-2-furanpropanoate(in) + a dicarboxylate(out). Its function is as follows. Secondary active transporter that functions as a Na(+)-independent organic anion (OA)/dicarboxylate antiporter where the uptake of one molecule of OA into the cell is coupled with an efflux of one molecule of intracellular dicarboxylate such as 2-oxoglutarate or glutarate. Mediates the uptake of OA across the basolateral side of proximal tubule epithelial cells, thereby contributing to the renal elimination of endogenous OA from the systemic circulation into the urine. Functions as a biopterin transporters involved in the uptake and the secretion of coenzymes tetrahydrobiopterin (BH4), dihydrobiopterin (BH2) and sepiapterin to urine, thereby determining baseline levels of blood biopterins. Transports prostaglandin E2 (PGE2) and prostaglandin F2-alpha (PGF2-alpha) and may contribute to their renal excretion. Also mediates the uptake of cyclic nucleotides such as cAMP and cGMP. Involved in the transport of neuroactive tryptophan metabolites kynurenate (KYNA) and xanthurenate (XA) and may contribute to their secretion from the brain. May transport glutamate. Also involved in the disposition of uremic toxins and potentially toxic xenobiotics by the renal organic anion secretory pathway, helping reduce their undesired toxicological effects on the body. Uremic toxins include the indoxyl sulfate (IS), hippurate/N-benzoylglycine (HA), indole acetate (IA), 3-carboxy-4- methyl-5-propyl-2-furanpropionate (CMPF) and urate. Xenobiotics include the mycotoxin ochratoxin (OTA). May also contribute to the transport of organic compounds in testes across the blood-testis-barrier. The chain is Solute carrier family 22 member 6 from Bos taurus (Bovine).